A 490-amino-acid chain; its full sequence is Argininosuccinate lyase (490 aa).

It belongs to the lyase 1 family. Argininosuccinate lyase subfamily.

It localises to the cytoplasm. The catalysed reaction is 2-(N(omega)-L-arginino)succinate = fumarate + L-arginine. It functions in the pathway amino-acid biosynthesis; L-arginine biosynthesis; L-arginine from L-ornithine and carbamoyl phosphate: step 3/3. The sequence is that of Argininosuccinate lyase from Bifidobacterium longum (strain DJO10A).